The chain runs to 505 residues: Catalase (505 aa).

Catalysis depends on residues histidine 58 and asparagine 131. Tyrosine 341 lines the heme pocket.

The protein belongs to the catalase family. The cofactor is heme.

The catalysed reaction is 2 H2O2 = O2 + 2 H2O. Decomposes hydrogen peroxide into water and oxygen; serves to protect cells from the toxic effects of hydrogen peroxide. This chain is Catalase (kat), found in Methanosarcina barkeri (strain Fusaro / DSM 804).